The sequence spans 211 residues: Sec-independent protein translocase protein TatB (211 aa).

A helical transmembrane segment spans residues 1-21; that stretch reads MFDIGVGELTLIAVVALVVLG. The interval 175–211 is disordered; the sequence is AHLTSAPAPPVTVAPVDAGTSASPTPSEPTKIQEKQP. Residues 194–204 are compositionally biased toward polar residues; sequence TSASPTPSEPT.

The protein belongs to the TatB family. The Tat system comprises two distinct complexes: a TatABC complex, containing multiple copies of TatA, TatB and TatC subunits, and a separate TatA complex, containing only TatA subunits. Substrates initially bind to the TatABC complex, which probably triggers association of the separate TatA complex to form the active translocon.

The protein localises to the cell inner membrane. Part of the twin-arginine translocation (Tat) system that transports large folded proteins containing a characteristic twin-arginine motif in their signal peptide across membranes. Together with TatC, TatB is part of a receptor directly interacting with Tat signal peptides. TatB may form an oligomeric binding site that transiently accommodates folded Tat precursor proteins before their translocation. This chain is Sec-independent protein translocase protein TatB, found in Xanthomonas oryzae pv. oryzae (strain MAFF 311018).